The primary structure comprises 492 residues: Ribose import ATP-binding protein RbsA (492 aa).

ABC transporter domains follow at residues 3-239 (IDMR…VGRK) and 238-492 (RKLE…TGGK). 35–42 (GENGAGKS) provides a ligand contact to ATP.

It belongs to the ABC transporter superfamily. Ribose importer (TC 3.A.1.2.1) family. As to quaternary structure, the complex is composed of an ATP-binding protein (RbsA), two transmembrane proteins (RbsC) and a solute-binding protein (RbsB).

The protein localises to the cell membrane. The enzyme catalyses D-ribose(out) + ATP + H2O = D-ribose(in) + ADP + phosphate + H(+). In terms of biological role, part of the ABC transporter complex RbsABC involved in ribose import. Responsible for energy coupling to the transport system. In Streptococcus agalactiae serotype V (strain ATCC BAA-611 / 2603 V/R), this protein is Ribose import ATP-binding protein RbsA.